A 447-amino-acid chain; its full sequence is Alpha-1,3-mannosyl-glycoprotein 2-beta-N-acetylglucosaminyltransferase (447 aa).

Over 1 to 6 (MLKKQT) the chain is Cytoplasmic. The chain crosses the membrane as a helical; Signal-anchor for type II membrane protein span at residues 7–29 (AGLVLWGAIIFVGWNALLLLFFW). At 30–447 (TRPAPGRLPS…TWTGYDPSWN (418 aa)) the chain is on the lumenal side. Residues Cys115 and Cys145 are joined by a disulfide bond. The substrate site is built by Arg117, Asp144, His190, and Asp212. Asp213 is a Mn(2+) binding site. The cysteines at positions 239 and 305 are disulfide-linked. Asp291 acts as the Proton acceptor in catalysis. A substrate-binding site is contributed by Ser322.

Belongs to the glycosyltransferase 13 family. Interacts with MGAT4D. Interacts with BRI3. Mn(2+) serves as cofactor. Detected in kidney, liver and brain.

It localises to the golgi apparatus membrane. Its subcellular location is the cytoplasm. The protein resides in the perinuclear region. The catalysed reaction is N(4)-(alpha-D-Man-(1-&gt;3)-[alpha-D-Man-(1-&gt;3)-[alpha-D-Man-(1-&gt;6)]-alpha-D-Man-(1-&gt;6)]-beta-D-Man-(1-&gt;4)-beta-D-GlcNAc-(1-&gt;4)-beta-D-GlcNAc)-L-asparaginyl-[protein] (N-glucan mannose isomer 5A1,2) + UDP-N-acetyl-alpha-D-glucosamine = N(4)-{beta-D-GlcNAc-(1-&gt;2)-alpha-D-Man-(1-&gt;3)-[alpha-D-Man-(1-&gt;3)-[alpha-D-Man-(1-&gt;6)]-alpha-D-Man-(1-&gt;6)]-beta-D-Man-(1-&gt;4)-beta-D-GlcNAc-(1-&gt;4)-beta-D-GlcNAc}-L-asparaginyl-[protein] + UDP + H(+). It functions in the pathway protein modification; protein glycosylation. Functionally, initiates complex N-linked carbohydrate formation. Essential for the conversion of high-mannose to hybrid and complex N-glycans. In Mus musculus (Mouse), this protein is Alpha-1,3-mannosyl-glycoprotein 2-beta-N-acetylglucosaminyltransferase (Mgat1).